Consider the following 1040-residue polypeptide: Alpha-mannosidase 2C1 (1040 aa).

Residues H260, D262, D372, and H577 each contribute to the Co(2+) site. D372 serves as the catalytic Nucleophile.

This sequence belongs to the glycosyl hydrolase 38 family. Co(2+) is required as a cofactor.

Its subcellular location is the cytoplasm. The catalysed reaction is Hydrolysis of terminal, non-reducing alpha-D-mannose residues in alpha-D-mannosides.. Strongly inhibited by swainsonine. Also inhibited to a lesser extent by deoxymannojirimycin (DMM). Cleaves alpha 1,2-, alpha 1,3-, and alpha 1,6-linked mannose residues on cytoplasmic free oligosaccharides generated by N-glycoprotein degradation pathways. The sequence is that of Alpha-mannosidase 2C1 (MAN2C1) from Homo sapiens (Human).